The chain runs to 838 residues: Leucine--tRNA ligase 1 (838 aa).

Positions 40-51 (PYPSGAGLHVGH) match the 'HIGH' region motif. The 'KMSKS' region signature appears at 608-612 (KMSKS). ATP is bound at residue K611.

The protein belongs to the class-I aminoacyl-tRNA synthetase family.

Its subcellular location is the cytoplasm. The enzyme catalyses tRNA(Leu) + L-leucine + ATP = L-leucyl-tRNA(Leu) + AMP + diphosphate. The sequence is that of Leucine--tRNA ligase 1 from Rhizobium johnstonii (strain DSM 114642 / LMG 32736 / 3841) (Rhizobium leguminosarum bv. viciae).